The sequence spans 230 residues: Cysteine S-methyltransferase OspZ (230 aa).

The interval Gly49–Arg52 is interaction with host proteins TAB2, TAB3 and ZRANB3. Ala92, Ser98, Arg107, Gln111, Tyr204, and Glu208 together coordinate S-adenosyl-L-methionine.

Belongs to the NleE/OspZ family. As to quaternary structure, monomer.

The protein resides in the secreted. It localises to the host cytoplasm. It is found in the host nucleus. It carries out the reaction L-cysteinyl-[protein] + S-adenosyl-L-methionine = S-methyl-L-cysteinyl-[protein] + S-adenosyl-L-homocysteine + H(+). Functionally, cysteine methyltransferase effector that inhibits host cell NF-kappa-B activation by preventing nuclear translocation of host protein RELA/p65. Acts by mediating cysteine methylation of host proteins TAB2 and TAB3: methylation of a conserved cysteine residue of the RanBP2-type zinc finger (NZF) of TAB2 and TAB3 disrupts zinc-binding, thereby inactivating the ubiquitin chain-binding activity of TAB2 and TAB3, leading to NF-kappa-B inactivation. Also mediates cysteine methylation of host protein ZRANB3, inactivating its ability to bind ubiquitin chains. This Shigella boydii protein is Cysteine S-methyltransferase OspZ.